The primary structure comprises 649 residues: Probable cyclic nucleotide-gated ion channel 12 (649 aa).

Residues 1 to 43 are Cytoplasmic-facing; sequence MNHRRSKFARIDSMGVDGKLKSVRGRLKKVYGKMKTLENWRKT. Residues 44 to 64 form a helical membrane-spanning segment; it reads VLLACVVALAIDPLFLFIPLI. The Extracellular segment spans residues 65–76; the sequence is DSQRFCFTFDKT. Residues 77 to 97 traverse the membrane as a helical segment; the sequence is LVAVVCVIRTFIDTFYVIHII. Residues 98–128 lie on the Cytoplasmic side of the membrane; the sequence is YYLITETIAPRSQASLRGEIVVHSKATLKTR. Residues 129–149 form a helical membrane-spanning segment; the sequence is LLFHFIVDIISVLPIPQVVVL. At 150–162 the chain is on the extracellular side; the sequence is TLIPLSASLVSER. The chain crosses the membrane as a helical span at residues 163–183; it reads ILKWIILSQYVPRIIRMYPLY. Over 184–200 the chain is Cytoplasmic; that stretch reads KEVTRAFGTVAESKWAG. The chain crosses the membrane as a helical span at residues 201–221; that stretch reads AALNLFLYMLHSYVFGAFWYL. At 222–329 the chain is on the extracellular side; sequence SSIERKSKCW…QNLETSNSAG (108 aa). Residues 330-350 form a helical membrane-spanning segment; sequence EIFFAIIICVSGLLLFAVLIG. Over 351-649 the chain is Cytoplasmic; that stretch reads NVQKYLQSST…ADLEFAKAEA (299 aa). A nucleoside 3',5'-cyclic phosphate is bound by residues 436–559 and E507; that span reads LNIM…TFRL. Residues 545-560 form a calmodulin-binding region; it reads LNVFQRQKLQRTFRLY. The IQ domain maps to 565–594; it reads RSWAAFFIQAAWRKHCKRKLSKTRDNENIP. The disordered stretch occupies residues 618 to 649; it reads RRKDTADCSSSPDMSPPVPHKPADLEFAKAEA. Residues 638 to 649 are compositionally biased toward basic and acidic residues; the sequence is KPADLEFAKAEA.

This sequence belongs to the cyclic nucleotide-gated cation channel (TC 1.A.1.5) family. In terms of assembly, homotetramer or heterotetramer.

The protein resides in the cell membrane. Its function is as follows. Probable cyclic nucleotide-gated ion channel. This Arabidopsis thaliana (Mouse-ear cress) protein is Probable cyclic nucleotide-gated ion channel 12 (CNGC12).